We begin with the raw amino-acid sequence, 186 residues long: MVAARAAAWLLLAAAACAPREQDFYDFKAVNIRGKLVSLEKYRGSVSLVVNVASECGFTDQHYRALQQLQRDLGPHHFNVLAFPCNQFGQQEPDSNKEIESFARRTYSVSFPMFSKIAVTGTGAHPAFKYLTETSGKEPTWNFWKYLVAPDGKVIGAWDPTVSVEEIRPQITALVRKLILKKREDL.

The signal sequence occupies residues 1–18 (MVAARAAAWLLLAAAACA). Cys-56 is an active-site residue.

This sequence belongs to the glutathione peroxidase family.

It localises to the secreted. The enzyme catalyses 2 glutathione + H2O2 = glutathione disulfide + 2 H2O. This Bos taurus (Bovine) protein is Glutathione peroxidase 7 (GPX7).